The chain runs to 324 residues: Spheroidene monooxygenase (324 aa).

The tract at residues 226–324 (GKDPVGEALT…PGKGGRKENA (99 aa)) is disordered. Composition is skewed to low complexity over residues 248–278 (PAAA…VEMP) and 287–313 (VVEA…NFKG).

The protein belongs to the CrtA family. Heme serves as cofactor.

It carries out the reaction spheroidene + 4 reduced [2Fe-2S]-[ferredoxin] + 2 O2 + 4 H(+) = spheroiden-2-one + 4 oxidized [2Fe-2S]-[ferredoxin] + 3 H2O. The catalysed reaction is spheroidene + 2 reduced [2Fe-2S]-[ferredoxin] + O2 + 2 H(+) = 2-hydroxyspheroidene + 2 oxidized [2Fe-2S]-[ferredoxin] + H2O. The enzyme catalyses 2-hydroxyspheroidene + 2 reduced [2Fe-2S]-[ferredoxin] + O2 + 2 H(+) = 2,2-dihydroxyspheroidene + 2 oxidized [2Fe-2S]-[ferredoxin] + H2O. It catalyses the reaction 2,2-dihydroxyspheroidene = spheroiden-2-one + H2O. The protein operates within carotenoid biosynthesis; spheroidene biosynthesis. Its function is as follows. Involved in the biosynthesis of the carotenoid spheroidene. Catalyzes the introduction of one keto group at the C-2 position of spheroidene. In vitro, can use nonnative substrates and produce oxocarotenoids with a hydroxy and/or a keto group, derived from neurosporene, lycopene, 3,4-didehydrolycopene or 3,4,3',4'-tetradehydrolycopene. The sequence is that of Spheroidene monooxygenase from Cereibacter sphaeroides (strain ATCC 17023 / DSM 158 / JCM 6121 / CCUG 31486 / LMG 2827 / NBRC 12203 / NCIMB 8253 / ATH 2.4.1.) (Rhodobacter sphaeroides).